A 221-amino-acid polypeptide reads, in one-letter code: MNNNNNNNNNNNNNNNNNNNNNNNNNNEEIKFNLNINEEKDDEIKDLYKVIESLKKELFEKYKENLLLKENLDQEIEFNKVLKFGMFEKNKEFEILATQLGILKSKYGNKKCDIEVIIISSDDEDDDNKNKNQLKDITTTTTSSTTTTTTTTSTTTTNNSSSENNFDDQNKEEVVFCKPYNQSDNDEDSKNNSKDLGYNENNIGGDATVGEYNSYVVKKEM.

Composition is skewed to low complexity over residues 1-27 (MNNN…NNNN) and 140-162 (TTTS…NSSS). Disordered stretches follow at residues 1–28 (MNNN…NNNE) and 140–205 (TTTS…NIGG).

This is an uncharacterized protein from Dictyostelium discoideum (Social amoeba).